We begin with the raw amino-acid sequence, 126 residues long: Protein LLP homolog (126 aa).

The segment covering 1 to 21 (MAKSLRSKWRRKMRAEKRKKV) has biased composition (basic residues). Disordered stretches follow at residues 1-22 (MAKS…KKVA) and 53-126 (VPPE…RLAW). Over residues 73 to 94 (DGGKMDLDTKRNKKTMLDEHGR) the composition is skewed to basic and acidic residues. Positions 103–126 (QAKKLKAKRVGKNGKPKPKKRLAW) are enriched in basic residues.

It belongs to the learning-associated protein family.

It is found in the nucleus. The protein resides in the nucleolus. Its subcellular location is the chromosome. Regulates dendritic and spine growth and synaptic transmission. The sequence is that of Protein LLP homolog (llph) from Danio rerio (Zebrafish).